Consider the following 397-residue polypeptide: Izumo sperm-egg fusion protein 1 (397 aa).

Positions M1–P21 are cleaved as a signal peptide. Intrachain disulfides connect C22–C149, C25–C152, C135–C159, C139–C165, and C182–C233. At C22–R319 the chain is on the extracellular side. Residues W148 to R160 are important for interaction with IZUMO1R. Residues E167–T251 form the Ig-like C2-type domain. Residue N204 is glycosylated (N-linked (GlcNAc...) asparagine). Residues E271–L292 form a disordered region. A helical transmembrane segment spans residues L320–L340. The Cytoplasmic segment spans residues H341 to N397. Residues N351 to N397 form a disordered region. Polar residues predominate over residues A360–M373. Residue S379 is modified to Phosphoserine. A compositionally biased stretch (basic and acidic residues) spans S388–N397.

The protein belongs to the Izumo family. In terms of assembly, monomer, homodimer; disulfide-linked and homooligomer; depending on the context. Interacts with IZUMO1R/JUNO. IZUMO1 and IZUMO1R/JUNO form a complex with 1:1 stoichiometry. In gamete recognition, IZUMO1R/JUNO first binds to monomeric IZUMO1. The weak, but specific interaction with IZUMO1R/JUNO induces IZUMO1 homodimerization. The process follows a tight binding phase where IZUMO1 bends the entire structure towards the sperm membrane side through a thiol-disulfide exchange reaction. The molecule no longer binds to IZUMO1R/JUNO and instead binds to a putative second oocyte receptor. Interacts with ACE3. Part of a oolemmal binding multimeric complex (IZUMO1 complex) composed at least of IZUMO1 and GLIPR1L1; the complex assemblage is influenced by the maturation status of the male germ cell. Interacts with GLIPR1L1. Interacts with FREY; the interaction retains IZUMO1 at the endoplasmic reticulum membrane and coordinates IZUMO1 complex assembly. Interacts with WDR54. Forms a complex with SPACA6 and TMEM81 on spermatocyte cell membrane. Post-translationally, N-glycosylated. Glycosylation is not essential for fusion and for proper protein trafficking in sperm. Phosphorylated. The cytoplasmic C-terminus is phosphorylated and undergoes phosphorylation changes during epididymal transit. As to expression, sperm-specific (at protein level). Detectable on sperm surface only after the acrosome reaction. Expressed in spermatozoa, more abundantly expressed in the head than the tail (at protein level).

It localises to the cell membrane. It is found in the cytoplasmic vesicle. The protein resides in the secretory vesicle. The protein localises to the acrosome membrane. Functionally, essential sperm cell-surface protein required for fertilization by acting as a ligand for IZUMO1R/JUNO receptor on egg. The IZUMO1:IZUMO1R/JUNO interaction is a necessary adhesion event between sperm and egg that is required for fertilization but is not sufficient for cell fusion. The ligand-receptor interaction probably does not act as a membrane 'fusogen'. Plays a critical role in sperm-oolemma binding prior to plasma membrane fusion. Can mediate cell-cell fusion in cultured mammalian cells independently of its binding to IZUMO1R/JUNO. The protein is Izumo sperm-egg fusion protein 1 of Mus musculus (Mouse).